A 312-amino-acid chain; its full sequence is Elongation factor Ts (312 aa).

An involved in Mg(2+) ion dislocation from EF-Tu region spans residues 84 to 87; sequence TDFV.

This sequence belongs to the EF-Ts family.

It localises to the cytoplasm. In terms of biological role, associates with the EF-Tu.GDP complex and induces the exchange of GDP to GTP. It remains bound to the aminoacyl-tRNA.EF-Tu.GTP complex up to the GTP hydrolysis stage on the ribosome. In Caulobacter vibrioides (strain ATCC 19089 / CIP 103742 / CB 15) (Caulobacter crescentus), this protein is Elongation factor Ts.